A 142-amino-acid polypeptide reads, in one-letter code: Large ribosomal subunit protein uL13 (142 aa).

This sequence belongs to the universal ribosomal protein uL13 family. Part of the 50S ribosomal subunit.

In terms of biological role, this protein is one of the early assembly proteins of the 50S ribosomal subunit, although it is not seen to bind rRNA by itself. It is important during the early stages of 50S assembly. The sequence is that of Large ribosomal subunit protein uL13 from Pseudomonas aeruginosa (strain LESB58).